Here is a 156-residue protein sequence, read N- to C-terminus: Endoribonuclease YbeY (156 aa).

The Zn(2+) site is built by histidine 122, histidine 126, and histidine 132.

It belongs to the endoribonuclease YbeY family. It depends on Zn(2+) as a cofactor.

Its subcellular location is the cytoplasm. Single strand-specific metallo-endoribonuclease involved in late-stage 70S ribosome quality control and in maturation of the 3' terminus of the 16S rRNA. The polypeptide is Endoribonuclease YbeY (Geobacillus kaustophilus (strain HTA426)).